Reading from the N-terminus, the 252-residue chain is Phosphate import ATP-binding protein PstB (252 aa).

The 242-residue stretch at 6–247 (ISAENLNLFY…PKDQRTEDYI (242 aa)) folds into the ABC transporter domain. 38 to 45 (GPSGCGKS) provides a ligand contact to ATP.

Belongs to the ABC transporter superfamily. Phosphate importer (TC 3.A.1.7) family. The complex is composed of two ATP-binding proteins (PstB), two transmembrane proteins (PstC and PstA) and a solute-binding protein (PstS).

Its subcellular location is the cell membrane. The enzyme catalyses phosphate(out) + ATP + H2O = ADP + 2 phosphate(in) + H(+). Functionally, part of the ABC transporter complex PstSACB involved in phosphate import. Responsible for energy coupling to the transport system. The sequence is that of Phosphate import ATP-binding protein PstB from Heliobacterium mobile (Heliobacillus mobilis).